Reading from the N-terminus, the 123-residue chain is MNQKQEDFSPSVKASLKSLNISFHKTRKVVNQIRGCSYEKALMILEFMPYRACKPITQLISSAASNANHNLGLKKKNLFISEAKVDEGTTIKRFQPRAQGRAYSIHKPTCHITIGMKSKNKIQ.

The protein belongs to the universal ribosomal protein uL22 family. Part of the 50S ribosomal subunit.

It localises to the plastid. The protein resides in the chloroplast. Its function is as follows. This protein binds specifically to 23S rRNA. In terms of biological role, the globular domain of the protein is located near the polypeptide exit tunnel on the outside of the subunit, while an extended beta-hairpin is found that lines the wall of the exit tunnel in the center of the 70S ribosome. The sequence is that of Large ribosomal subunit protein uL22c (rpl22) from Chara vulgaris (Common stonewort).